The primary structure comprises 215 residues: NAD(P)H-hydrate epimerase (215 aa).

The 205-residue stretch at 8–212 (MYNIENKGHD…KIGIPPEAEE (205 aa)) folds into the YjeF N-terminal domain. Residue 57–61 (NNGGD) participates in (6S)-NADPHX binding. K(+) is bound by residues Asn58 and Asp124. Residues 128–134 (GTGISGE), Tyr139, and Asp157 each bind (6S)-NADPHX. Ser160 is a K(+) binding site.

This sequence belongs to the NnrE/AIBP family. Requires K(+) as cofactor.

The enzyme catalyses (6R)-NADHX = (6S)-NADHX. It catalyses the reaction (6R)-NADPHX = (6S)-NADPHX. Its function is as follows. Catalyzes the epimerization of the S- and R-forms of NAD(P)HX, a damaged form of NAD(P)H that is a result of enzymatic or heat-dependent hydration. This is a prerequisite for the S-specific NAD(P)H-hydrate dehydratase to allow the repair of both epimers of NAD(P)HX. This Nitrosopumilus maritimus (strain SCM1) protein is NAD(P)H-hydrate epimerase.